A 184-amino-acid chain; its full sequence is Flavodoxin FldP (184 aa).

In terms of domain architecture, Flavodoxin-like spans 4–176 (AVVVYFSGYG…TVKLYAARVA (173 aa)). Residues 10-14 (SGYGH) and 91-147 (GFTN…SVGA) contribute to the FMN site.

Belongs to the FldP flavodoxin family. It depends on FMN as a cofactor.

Functionally, flavodoxins are low-potential electron donors to a number of redox enzymes. FldP protects the cell from oxidative stress and reactive oxygen species (ROS) damage, thereby expanding the capabilities of P.aeruginosa to thrive in hostile environments, and contributes to bacterial survival within the host. In vitro, is able to mediate ferredoxin-NADP(H) reductase (FNR)-driven cytochrome c reduction. The polypeptide is Flavodoxin FldP (Pseudomonas aeruginosa (strain UCBPP-PA14)).